The primary structure comprises 1120 residues: Elongation factor-like GTPase 1 (1120 aa).

In terms of domain architecture, tr-type G spans 17–272 (ANIRNICVLA…LMKTLWGDYY (256 aa)). GTP contacts are provided by residues 26–33 (AHVDHGKT), 92–96 (DSPGH), and 146–149 (NKID). Residues 430–496 (PRPLTQEEIA…VESMTPKPVL (67 aa)) are disordered. Basic and acidic residues-rich tracts occupy residues 438–452 (IAQR…HAEK) and 475–484 (PKGEEPRGDE). N6-acetyllysine is present on K528. The tract at residues 907 to 930 (ASDLAKEGQEENETCSGGNENQEL) is disordered. The span at 920 to 930 (TCSGGNENQEL) shows a compositional bias: polar residues.

It belongs to the TRAFAC class translation factor GTPase superfamily. Classic translation factor GTPase family. In terms of assembly, associates with the 60S ribosomal subunit. Found in a complex consisting of the 60S ribosomal subunit, SBDS and EFL1. Interacts with SBDS and binds to GTP and GDP; the interaction with SBDS decreases EFL1 affinity for GDP and facilitates GDP release. In terms of tissue distribution, expressed at low levels in brain. Expression is highly increased in glioma tissues.

The catalysed reaction is GTP + H2O = GDP + phosphate + H(+). GTPase activity is stimulated in the presence of 60S ribosome subunits. In terms of biological role, GTPase involved in the biogenesis of the 60S ribosomal subunit and translational activation of ribosomes. Together with SBDS, triggers the GTP-dependent release of EIF6 from 60S pre-ribosomes in the cytoplasm, thereby activating ribosomes for translation competence by allowing 80S ribosome assembly and facilitating EIF6 recycling to the nucleus, where it is required for 60S rRNA processing and nuclear export. The sequence is that of Elongation factor-like GTPase 1 from Homo sapiens (Human).